A 428-amino-acid chain; its full sequence is Light-independent protochlorophyllide reductase subunit N (428 aa).

3 residues coordinate [4Fe-4S] cluster: cysteine 16, cysteine 41, and cysteine 102.

The protein belongs to the BchN/ChlN family. Protochlorophyllide reductase is composed of three subunits; ChlL, ChlN and ChlB. Forms a heterotetramer of two ChlB and two ChlN subunits. Requires [4Fe-4S] cluster as cofactor.

The catalysed reaction is chlorophyllide a + oxidized 2[4Fe-4S]-[ferredoxin] + 2 ADP + 2 phosphate = protochlorophyllide a + reduced 2[4Fe-4S]-[ferredoxin] + 2 ATP + 2 H2O. Its pathway is porphyrin-containing compound metabolism; chlorophyll biosynthesis (light-independent). Component of the dark-operative protochlorophyllide reductase (DPOR) that uses Mg-ATP and reduced ferredoxin to reduce ring D of protochlorophyllide (Pchlide) to form chlorophyllide a (Chlide). This reaction is light-independent. The NB-protein (ChlN-ChlB) is the catalytic component of the complex. This is Light-independent protochlorophyllide reductase subunit N from Synechococcus sp. (strain CC9311).